Consider the following 203-residue polypeptide: Ras-like protein family member 10A (203 aa).

Positions 1-203 (MGGSLRVAVL…ALHPARCSLM (203 aa)) are small GTPase-like. 11-18 (GAPGVGKT) is a GTP binding site. Positions 33–42 (HRPTDGPRLY) match the Effector region motif. Residues 59–62 (DGDV) and 129–132 (NKRD) contribute to the GTP site. C200 carries the cysteine methyl ester modification. Residue C200 is the site of S-farnesyl cysteine attachment. A propeptide spans 201–203 (SLM) (removed in mature form).

It belongs to the small GTPase superfamily. Ras family. In terms of processing, isoprenylation is essential for nucleolar localization, and the proliferation-inhibiting activity of RASL10A. As to expression, expression appears to be strictly limited to the central nervous system.

The protein localises to the cell membrane. Its subcellular location is the nucleus. The protein resides in the nucleolus. It carries out the reaction GTP + H2O = GDP + phosphate + H(+). Potent inhibitor of cellular proliferation. This is Ras-like protein family member 10A (RASL10A) from Homo sapiens (Human).